Consider the following 481-residue polypeptide: UDP-N-acetylmuramoyl-L-alanyl-D-glutamate--L-lysine ligase (481 aa).

UDP-N-acetyl-alpha-D-muramoyl-L-alanyl-D-glutamate is bound at residue Ser-42. ATP is bound at residue 118–124; that stretch reads GTKGKTT. Residues Gln-158, 160–161, Ser-187, and Arg-195 contribute to the UDP-N-acetyl-alpha-D-muramoyl-L-alanyl-D-glutamate site; that span reads TT. The residue at position 229 (Lys-229) is an N6-carboxylysine. Positions 404–407 match the L-lysine recognition motif motif; that stretch reads DDPN.

The protein belongs to the MurCDEF family. MurE subfamily. In terms of processing, carboxylation is probably crucial for Mg(2+) binding and, consequently, for the gamma-phosphate positioning of ATP.

Its subcellular location is the cytoplasm. The enzyme catalyses UDP-N-acetyl-alpha-D-muramoyl-L-alanyl-D-glutamate + L-lysine + ATP = UDP-N-acetyl-alpha-D-muramoyl-L-alanyl-gamma-D-glutamyl-L-lysine + ADP + phosphate + H(+). Its pathway is cell wall biogenesis; peptidoglycan biosynthesis. Catalyzes the addition of L-lysine to the nucleotide precursor UDP-N-acetylmuramoyl-L-alanyl-D-glutamate (UMAG) in the biosynthesis of bacterial cell-wall peptidoglycan. This chain is UDP-N-acetylmuramoyl-L-alanyl-D-glutamate--L-lysine ligase, found in Streptococcus pyogenes serotype M28 (strain MGAS6180).